The chain runs to 366 residues: Major outer membrane protein (366 aa).

Residues 1 to 21 (MKKTLLATAIAGAMAASGAQA) form the signal peptide.

The protein belongs to the Gram-negative porin family. As to quaternary structure, homotrimer.

The protein localises to the cell outer membrane. In Halomonas elongata (strain ATCC 33173 / DSM 2581 / NBRC 15536 / NCIMB 2198 / 1H9), this protein is Major outer membrane protein.